The primary structure comprises 65 residues: Large ribosomal subunit protein bL35 (65 aa).

Belongs to the bacterial ribosomal protein bL35 family.

This is Large ribosomal subunit protein bL35 from Aeromonas salmonicida (strain A449).